Consider the following 614-residue polypeptide: V-type proton ATPase catalytic subunit A isoform 2 (614 aa).

At Ser-142 the chain carries Phosphoserine. Residue 247 to 254 participates in ATP binding; that stretch reads GAFGCGKT.

The protein belongs to the ATPase alpha/beta chains family. V-ATPase is a heteromultimeric enzyme made up of two complexes: the ATP-hydrolytic V1 complex and the proton translocation V0 complex. The V1 complex consists of three catalytic AB heterodimers that form a heterohexamer, three peripheral stalks each consisting of EG heterodimers, one central rotor including subunits D and F, and the regulatory subunits C and H. The proton translocation complex V0 consists of the proton transport subunit a, a ring of proteolipid subunits c9c'', rotary subunit d, subunits e and f, and the accessory subunits VhaAC45 and ATP6AP2.

It catalyses the reaction ATP + H2O + 4 H(+)(in) = ADP + phosphate + 5 H(+)(out). Its activity is regulated as follows. ATP hydrolysis occurs at the interface between the nucleotide-binding domains of subunits A and B. ATP hydrolysis triggers a conformational change in the subunits D and F, which induces a shift of subunit d. The c-ring is subsequently rotated and results in a continuous proton translocation across the membrane. Its function is as follows. Catalytic subunit of the V1 complex of vacuolar(H+)-ATPase (V-ATPase), a multisubunit enzyme composed of a peripheral complex (V1) that hydrolyzes ATP and a membrane integral complex (V0) that translocates protons. V-ATPase is responsible for acidifying and maintaining the pH of intracellular compartments and in some cell types, is targeted to the plasma membrane, where it is responsible for acidifying the extracellular environment. In Drosophila melanogaster (Fruit fly), this protein is V-type proton ATPase catalytic subunit A isoform 2 (Vha68-2).